Reading from the N-terminus, the 235-residue chain is Derlin-3 (235 aa).

The Cytoplasmic segment spans residues 1–22 (MAWQGLAAEFLQVPAVTRAYTA). Residues 23 to 43 (ACVLTTAAVQLELLSPFQLYF) form a helical membrane-spanning segment. Over 44–58 (NPHLVFRKFQVWRLV) the chain is Lumenal. Residues 59–79 (TNFLFFGPLGFSFFFNMLFVF) form a helical membrane-spanning segment. Over 80–98 (RYCRMLEEGSFRGRTADFV) the chain is Cytoplasmic. Residues 99–119 (FMFLFGGVLMTLLGLLGSLFF) traverse the membrane as a helical segment. Over 120–157 (LGQALMAMLVYVWSRRSPRVRVNFFGLLTFQAPFLPWA) the chain is Lumenal. A helical transmembrane segment spans residues 158–178 (LMGFSLLLGNSILVDLLGIAV). Topologically, residues 179-235 (GHIYYFLEDVFPNQPGGKRLLQTPGFLKLLLDAPAEDPNYLPLPEEQPGPHLPPPQQ) are cytoplasmic. Residues 216–235 (PNYLPLPEEQPGPHLPPPQQ) form a disordered region. Pro residues predominate over residues 223–235 (EEQPGPHLPPPQQ).

The protein belongs to the derlin family. Forms homo- and heterooligomers with DERL2 and, to a lesser extent, with DERL1. Interacts with VCP and EDEM1. Interacts with SELENOK and SELENOS. Interacts with the signal recognition particle/SRP and the SRP receptor; in the process of endoplasmic reticulum stress-induced pre-emptive quality control. In terms of tissue distribution, unlike DERL1 and DERL2, restricted to several tissues. Expressed at high levels in placenta, pancreas, spleen and small intestine.

It is found in the endoplasmic reticulum membrane. Its function is as follows. Functional component of endoplasmic reticulum-associated degradation (ERAD) for misfolded lumenal glycoproteins, but not that of misfolded nonglycoproteins. May act by forming a channel that allows the retrotranslocation of misfolded glycoproteins into the cytosol where they are ubiquitinated and degraded by the proteasome. May mediate the interaction between VCP and the misfolded glycoproteins. May be involved in endoplasmic reticulum stress-induced pre-emptive quality control, a mechanism that selectively attenuates the translocation of newly synthesized proteins into the endoplasmic reticulum and reroutes them to the cytosol for proteasomal degradation. The sequence is that of Derlin-3 from Homo sapiens (Human).